A 910-amino-acid chain; its full sequence is 2-oxoglutarate dehydrogenase E1 component (910 aa).

It belongs to the alpha-ketoglutarate dehydrogenase family. In terms of assembly, homodimer. Part of the 2-oxoglutarate dehydrogenase (OGDH) complex composed of E1 (2-oxoglutarate dehydrogenase), E2 (dihydrolipoamide succinyltransferase) and E3 (dihydrolipoamide dehydrogenase); the complex contains multiple copies of the three enzymatic components (E1, E2 and E3). Thiamine diphosphate serves as cofactor.

The catalysed reaction is N(6)-[(R)-lipoyl]-L-lysyl-[protein] + 2-oxoglutarate + H(+) = N(6)-[(R)-S(8)-succinyldihydrolipoyl]-L-lysyl-[protein] + CO2. Its function is as follows. E1 component of the 2-oxoglutarate dehydrogenase (OGDH) complex which catalyzes the decarboxylation of 2-oxoglutarate, the first step in the conversion of 2-oxoglutarate to succinyl-CoA and CO(2). This Staphylococcus aureus (strain N315) protein is 2-oxoglutarate dehydrogenase E1 component.